We begin with the raw amino-acid sequence, 595 residues long: Actin-histidine N-methyltransferase (595 aa).

Positions 1–22 (MGKKSRVKTQKSGTGATATVSP) are disordered. The span at 10-20 (QKSGTGATATV) shows a compositional bias: polar residues. S-adenosyl-L-methionine is bound by residues Arg75, 104–106 (EGF), Arg254, 275–279 (DMCNH), and 325–327 (SGF). The region spanning 94 to 314 (EGFEMVNFKE…AGEQIYIFYG (221 aa)) is the SET domain. Position 513 is a phosphoserine (Ser513). Residues 549–573 (ENGLVNGENSIPNGTRSENENLNQE) show a composition bias toward polar residues. The interval 549–595 (ENGLVNGENSIPNGTRSENENLNQEGSKRAVEDAKGSSSDSTDEVKE) is disordered. Residues 574 to 583 (GSKRAVEDAK) show a composition bias toward basic and acidic residues.

This sequence belongs to the class V-like SAM-binding methyltransferase superfamily. SETD3 actin-histidine methyltransferase family. As to quaternary structure, interacts with MYOD1. Post-translationally, phosphorylated by GSK3B, which is required for recognition by the SCF(FBXW7) complex and subsequent degradation. Ubiquitinated by the SCF(FBXW7) complex following phosphorylation by GSK3B, leading to its degradation by the proteasome.

Its subcellular location is the cytoplasm. It localises to the nucleus. The enzyme catalyses L-histidyl-[protein] + S-adenosyl-L-methionine = N(tele)-methyl-L-histidyl-[protein] + S-adenosyl-L-homocysteine + H(+). Its function is as follows. Protein-histidine N-methyltransferase that specifically mediates 3-methylhistidine (tele-methylhistidine) methylation of actin at 'His-73'. Histidine methylation of actin is required for smooth muscle contraction of the laboring uterus during delivery. Does not have protein-lysine N-methyltransferase activity and probably only catalyzes histidine methylation of actin. This Plecturocebus moloch (Dusky titi monkey) protein is Actin-histidine N-methyltransferase.